Consider the following 518-residue polypeptide: Cytochrome P450 1A1 (518 aa).

The segment at 33 to 44 is mitochondrial targeting signal; it reads SKPRVPKGLKRL. Ser-71 is a glycosylation site (O-linked (GlcNAc) serine). A substrate-binding site is contributed by Phe-228. Heme is bound at residue Cys-461.

This sequence belongs to the cytochrome P450 family. Interacts with cytosolic chaperones HSP70 and HSP90; this interaction is required for initial targeting to mitochondria. Interacts (via mitochondrial targeting signal) with TOMM40 (via N-terminus); this interaction is required for translocation across the mitochondrial outer membrane. It depends on heme as a cofactor.

It is found in the endoplasmic reticulum membrane. The protein resides in the mitochondrion inner membrane. Its subcellular location is the microsome membrane. The protein localises to the cytoplasm. It catalyses the reaction an organic molecule + reduced [NADPH--hemoprotein reductase] + O2 = an alcohol + oxidized [NADPH--hemoprotein reductase] + H2O + H(+). The enzyme catalyses estrone + reduced [NADPH--hemoprotein reductase] + O2 = 2-hydroxyestrone + oxidized [NADPH--hemoprotein reductase] + H2O + H(+). It carries out the reaction estrone + reduced [NADPH--hemoprotein reductase] + O2 = 4-hydroxyestrone + oxidized [NADPH--hemoprotein reductase] + H2O + H(+). The catalysed reaction is estrone + reduced [NADPH--hemoprotein reductase] + O2 = 6alpha-hydroxyestrone + oxidized [NADPH--hemoprotein reductase] + H2O + H(+). It catalyses the reaction estrone + reduced [NADPH--hemoprotein reductase] + O2 = 15alpha-hydroxyestrone + oxidized [NADPH--hemoprotein reductase] + H2O + H(+). The enzyme catalyses estrone + reduced [NADPH--hemoprotein reductase] + O2 = 16alpha-hydroxyestrone + oxidized [NADPH--hemoprotein reductase] + H2O + H(+). It carries out the reaction 17beta-estradiol + reduced [NADPH--hemoprotein reductase] + O2 = 2-hydroxy-17beta-estradiol + oxidized [NADPH--hemoprotein reductase] + H2O + H(+). The catalysed reaction is 17beta-estradiol + reduced [NADPH--hemoprotein reductase] + O2 = 4-hydroxy-17beta-estradiol + oxidized [NADPH--hemoprotein reductase] + H2O + H(+). It catalyses the reaction 17beta-estradiol + reduced [NADPH--hemoprotein reductase] + O2 = 6alpha-hydroxy-17beta-estradiol + oxidized [NADPH--hemoprotein reductase] + H2O + H(+). The enzyme catalyses 17beta-estradiol + reduced [NADPH--hemoprotein reductase] + O2 = 7alpha-hydroxy-17beta-estradiol + oxidized [NADPH--hemoprotein reductase] + H2O + H(+). It carries out the reaction 17beta-estradiol + reduced [NADPH--hemoprotein reductase] + O2 = 15alpha-hydroxy-17beta-estradiol + oxidized [NADPH--hemoprotein reductase] + H2O + H(+). The catalysed reaction is (5Z,8Z,11Z)-eicosatrienoate + reduced [NADPH--hemoprotein reductase] + O2 = 19-hydroxy-(5Z,8Z,11Z)-eicosatrienoate + oxidized [NADPH--hemoprotein reductase] + H2O + H(+). It catalyses the reaction (5Z,8Z,11Z,14Z)-eicosatetraenoate + reduced [NADPH--hemoprotein reductase] + O2 = 16-hydroxy-(5Z,8Z,11Z,14Z)-eicosatetraenoate + oxidized [NADPH--hemoprotein reductase] + H2O + H(+). The enzyme catalyses (5Z,8Z,11Z,14Z)-eicosatetraenoate + reduced [NADPH--hemoprotein reductase] + O2 = 17-hydroxy-(5Z,8Z,11Z,14Z)-eicosatetraenoate + oxidized [NADPH--hemoprotein reductase] + H2O + H(+). It carries out the reaction (5Z,8Z,11Z,14Z)-eicosatetraenoate + reduced [NADPH--hemoprotein reductase] + O2 = 18-hydroxy-(5Z,8Z,11Z,14Z)-eicosatetraenoate + oxidized [NADPH--hemoprotein reductase] + H2O + H(+). The catalysed reaction is (5Z,8Z,11Z,14Z)-eicosatetraenoate + reduced [NADPH--hemoprotein reductase] + O2 = 19-hydroxy-(5Z,8Z,11Z,14Z)-eicosatetraenoate + oxidized [NADPH--hemoprotein reductase] + H2O + H(+). It catalyses the reaction (5Z,8Z,11Z,14Z,17Z)-eicosapentaenoate + reduced [NADPH--hemoprotein reductase] + O2 = 19-hydroxy-(5Z,8Z,11Z,14Z,17Z)-eicosapentaenoate + oxidized [NADPH--hemoprotein reductase] + H2O + H(+). The enzyme catalyses (5Z,8Z,11Z,14Z)-eicosatetraenoate + reduced [NADPH--hemoprotein reductase] + O2 = (8R,9S)-epoxy-(5Z,11Z,14Z)-eicosatrienoate + oxidized [NADPH--hemoprotein reductase] + H2O + H(+). It carries out the reaction (5Z,8Z,11Z,14Z)-eicosatetraenoate + reduced [NADPH--hemoprotein reductase] + O2 = (11R,12S)-epoxy-(5Z,8Z,14Z)-eicosatrienoate + oxidized [NADPH--hemoprotein reductase] + H2O + H(+). The catalysed reaction is (5Z,8Z,11Z,14Z)-eicosatetraenoate + reduced [NADPH--hemoprotein reductase] + O2 = (14S,15R)-epoxy-(5Z,8Z,11Z)-eicosatrienoate + oxidized [NADPH--hemoprotein reductase] + H2O + H(+). It catalyses the reaction (5Z,8Z,11Z,14Z)-eicosatetraenoate + reduced [NADPH--hemoprotein reductase] + O2 = (14R,15S)-epoxy-(5Z,8Z,11Z)-eicosatrienoate + oxidized [NADPH--hemoprotein reductase] + H2O + H(+). The enzyme catalyses (5Z,8Z,11Z,14Z,17Z)-eicosapentaenoate + reduced [NADPH--hemoprotein reductase] + O2 = (17R,18S)-epoxy-(5Z,8Z,11Z,14Z)-eicosatetraenoate + oxidized [NADPH--hemoprotein reductase] + H2O + H(+). It carries out the reaction (4Z,7Z,10Z,13Z,16Z,19Z)-docosahexaenoate + reduced [NADPH--hemoprotein reductase] + O2 = (19S,20R)-epoxy-(4Z,7Z,10Z,13Z,16Z)-docosapentaenoate + oxidized [NADPH--hemoprotein reductase] + H2O + H(+). The catalysed reaction is (4Z,7Z,10Z,13Z,16Z,19Z)-docosahexaenoate + reduced [NADPH--hemoprotein reductase] + O2 = (19R,20S)-epoxy-(4Z,7Z,10Z,13Z,16Z)-docosapentaenoate + oxidized [NADPH--hemoprotein reductase] + H2O + H(+). It catalyses the reaction all-trans-retinol + reduced [NADPH--hemoprotein reductase] + O2 = all-trans-retinal + oxidized [NADPH--hemoprotein reductase] + 2 H2O + H(+). The enzyme catalyses all-trans-retinal + reduced [NADPH--hemoprotein reductase] + O2 = all-trans-retinoate + oxidized [NADPH--hemoprotein reductase] + H2O + 2 H(+). It carries out the reaction (13S)-hydroperoxy-(9Z,11E)-octadecadienoate = 13-oxo-(9Z,11E)-octadecadienoate + H2O. The catalysed reaction is (12S)-hydroperoxy-(5Z,8Z,10E,14Z)-eicosatetraenoate = 12-oxo-(5Z,8Z,10E,14Z)-eicosatetraenoate + H2O. It catalyses the reaction (15S)-hydroperoxy-(5Z,8Z,11Z,13E)-eicosatetraenoate = 15-oxo-(5Z,8Z,11Z,13E)-eicosatetraenoate + H2O. The enzyme catalyses (5S)-hydroperoxy-(6E,8Z,11Z,14Z)-eicosatetraenoate = 5-oxo-(6E,8Z,11Z,14Z)-eicosatetraenoate + H2O. Its pathway is steroid hormone biosynthesis. It functions in the pathway lipid metabolism; fatty acid metabolism. It participates in cofactor metabolism; retinol metabolism. Functionally, a cytochrome P450 monooxygenase involved in the metabolism of various endogenous substrates, including fatty acids, steroid hormones and vitamins. Mechanistically, uses molecular oxygen inserting one oxygen atom into a substrate, and reducing the second into a water molecule, with two electrons provided by NADPH via cytochrome P450 reductase (CPR; NADPH-ferrihemoprotein reductase). Catalyzes the hydroxylation of carbon-hydrogen bonds. Exhibits high catalytic activity for the formation of hydroxyestrogens from estrone (E1) and 17beta-estradiol (E2), namely 2-hydroxy E1 and E2, as well as D-ring hydroxylated E1 and E2 at the C15alpha and C16alpha positions. Displays different regioselectivities for polyunsaturated fatty acids (PUFA) hydroxylation. Catalyzes the epoxidation of double bonds of certain PUFA. Converts arachidonic acid toward epoxyeicosatrienoic acid (EET) regioisomers, 8,9-, 11,12-, and 14,15-EET, that function as lipid mediators in the vascular system. Displays an absolute stereoselectivity in the epoxidation of eicosapentaenoic acid (EPA) producing the 17(R),18(S) enantiomer. May play an important role in all-trans retinoic acid biosynthesis in extrahepatic tissues. Catalyzes two successive oxidative transformation of all-trans retinol to all-trans retinal and then to the active form all-trans retinoic acid. May also participate in eicosanoids metabolism by converting hydroperoxide species into oxo metabolites (lipoxygenase-like reaction, NADPH-independent). The protein is Cytochrome P450 1A1 (CYP1A1) of Oryctolagus cuniculus (Rabbit).